The chain runs to 387 residues: 3-ketoacyl-CoA thiolase (387 aa).

C91 (acyl-thioester intermediate) is an active-site residue. Catalysis depends on proton acceptor residues H343 and C373.

It belongs to the thiolase-like superfamily. Thiolase family. As to quaternary structure, heterotetramer of two alpha chains (FadB) and two beta chains (FadA).

It localises to the cytoplasm. It catalyses the reaction an acyl-CoA + acetyl-CoA = a 3-oxoacyl-CoA + CoA. It functions in the pathway lipid metabolism; fatty acid beta-oxidation. Functionally, catalyzes the final step of fatty acid oxidation in which acetyl-CoA is released and the CoA ester of a fatty acid two carbons shorter is formed. The protein is 3-ketoacyl-CoA thiolase of Yersinia enterocolitica serotype O:8 / biotype 1B (strain NCTC 13174 / 8081).